The chain runs to 909 residues: NADH-quinone oxidoreductase subunit G (909 aa).

The 83-residue stretch at methionine 1–glutamate 83 folds into the 2Fe-2S ferredoxin-type domain. [2Fe-2S] cluster is bound by residues cysteine 34, cysteine 45, cysteine 48, and cysteine 67. Residues glutamate 83–glycine 122 enclose the 4Fe-4S His(Cys)3-ligated-type domain. 12 residues coordinate [4Fe-4S] cluster: histidine 99, cysteine 103, cysteine 106, cysteine 112, cysteine 151, cysteine 154, cysteine 157, cysteine 201, cysteine 228, cysteine 231, cysteine 235, and cysteine 263. Residues methionine 221 to aspartate 277 form the 4Fe-4S Mo/W bis-MGD-type domain.

It belongs to the complex I 75 kDa subunit family. As to quaternary structure, composed of 13 different subunits. Subunits NuoCD, E, F, and G constitute the peripheral sector of the complex. [2Fe-2S] cluster is required as a cofactor. [4Fe-4S] cluster serves as cofactor.

The catalysed reaction is a quinone + NADH + 5 H(+)(in) = a quinol + NAD(+) + 4 H(+)(out). Functionally, NDH-1 shuttles electrons from NADH, via FMN and iron-sulfur (Fe-S) centers, to quinones in the respiratory chain. The immediate electron acceptor for the enzyme in this species is believed to be ubiquinone. Couples the redox reaction to proton translocation (for every two electrons transferred, four hydrogen ions are translocated across the cytoplasmic membrane), and thus conserves the redox energy in a proton gradient. This chain is NADH-quinone oxidoreductase subunit G (nuoG), found in Shewanella oneidensis (strain ATCC 700550 / JCM 31522 / CIP 106686 / LMG 19005 / NCIMB 14063 / MR-1).